The chain runs to 776 residues: Ribosomal RNA large subunit methyltransferase K/L (776 aa).

The THUMP domain maps to 68 to 183; sequence DLYKICLWSR…DKQAELYLDL (116 aa).

This sequence belongs to the methyltransferase superfamily. RlmKL family.

The protein resides in the cytoplasm. The catalysed reaction is guanosine(2445) in 23S rRNA + S-adenosyl-L-methionine = N(2)-methylguanosine(2445) in 23S rRNA + S-adenosyl-L-homocysteine + H(+). It carries out the reaction guanosine(2069) in 23S rRNA + S-adenosyl-L-methionine = N(2)-methylguanosine(2069) in 23S rRNA + S-adenosyl-L-homocysteine + H(+). In terms of biological role, specifically methylates the guanine in position 2445 (m2G2445) and the guanine in position 2069 (m7G2069) of 23S rRNA. In Psychrobacter cryohalolentis (strain ATCC BAA-1226 / DSM 17306 / VKM B-2378 / K5), this protein is Ribosomal RNA large subunit methyltransferase K/L.